Reading from the N-terminus, the 292-residue chain is Shikimate dehydrogenase (NADP(+)) (292 aa).

Shikimate-binding positions include 22–24 (SLS) and Ser-69. Lys-73 (proton acceptor) is an active-site residue. Shikimate is bound by residues Asn-94 and Asp-111. NADP(+)-binding positions include 135–139 (GVGGA) and Ile-236. Tyr-238 lines the shikimate pocket. An NADP(+)-binding site is contributed by Gly-260.

Belongs to the shikimate dehydrogenase family. As to quaternary structure, homodimer.

It carries out the reaction shikimate + NADP(+) = 3-dehydroshikimate + NADPH + H(+). Its pathway is metabolic intermediate biosynthesis; chorismate biosynthesis; chorismate from D-erythrose 4-phosphate and phosphoenolpyruvate: step 4/7. Functionally, involved in the biosynthesis of the chorismate, which leads to the biosynthesis of aromatic amino acids. Catalyzes the reversible NADPH linked reduction of 3-dehydroshikimate (DHSA) to yield shikimate (SA). The sequence is that of Shikimate dehydrogenase (NADP(+)) from Streptococcus pyogenes serotype M2 (strain MGAS10270).